The following is a 188-amino-acid chain: Threonylcarbamoyl-AMP synthase (188 aa).

The YrdC-like domain maps to 4-188; it reads VENLQQAVDA…ARSLQVLRQG (185 aa).

The protein belongs to the SUA5 family. TsaC subfamily.

The protein resides in the cytoplasm. The enzyme catalyses L-threonine + hydrogencarbonate + ATP = L-threonylcarbamoyladenylate + diphosphate + H2O. Its function is as follows. Required for the formation of a threonylcarbamoyl group on adenosine at position 37 (t(6)A37) in tRNAs that read codons beginning with adenine. Catalyzes the conversion of L-threonine, HCO(3)(-)/CO(2) and ATP to give threonylcarbamoyl-AMP (TC-AMP) as the acyladenylate intermediate, with the release of diphosphate. This chain is Threonylcarbamoyl-AMP synthase, found in Vibrio cholerae serotype O1 (strain ATCC 39541 / Classical Ogawa 395 / O395).